Reading from the N-terminus, the 260-residue chain is Small ribosomal subunit protein eS1 (260 aa).

Positions 1 to 18 are enriched in basic residues; sequence MAVGKNKRISKGKKGGKK. Positions 1–22 are disordered; it reads MAVGKNKRISKGKKGGKKKAAD.

The protein belongs to the eukaryotic ribosomal protein eS1 family. In terms of assembly, component of the small ribosomal subunit. Mature ribosomes consist of a small (40S) and a large (60S) subunit. The 40S subunit contains about 33 different proteins and 1 molecule of RNA (18S). The 60S subunit contains about 49 different proteins and 3 molecules of RNA (25S, 5.8S and 5S).

The protein localises to the cytoplasm. The chain is Small ribosomal subunit protein eS1 from Helianthus annuus (Common sunflower).